A 237-amino-acid chain; its full sequence is MISAQAYGENGKMKEYHYTGPVEHKFSPYAFNGGTVLAVAGEDFAIVASDTRLSEGYSIHSRDSPKCYKLTDTTVLGCSGFHGDCLTLTKIIEARLKMYKHSNNKSMTSGAIAAMLSTILYGRRFFPYYVYNIIGGLDEEGRGAVYSFDPVGSYQRDTYKAGGSASAMLQPLLDNQIGFKNMENVEHVPLTQEKAVQLVKDVFISAAERDVYTGDALKVCIVSKEGIKEEIVPLRKD.

The protein belongs to the peptidase T1B family. As to quaternary structure, the 26S proteasome consists of a 20S proteasome core and two 19S regulatory subunits. The 20S proteasome core is a barrel-shaped complex made of 28 subunits that are arranged in four stacked rings. The two outer rings are each formed by seven alpha subunits, and the two inner rings are formed by seven beta subunits. The proteolytic activity is exerted by three beta-subunits psmb5, psmb6 and psmb7.

It localises to the cytoplasm. Its subcellular location is the nucleus. In terms of biological role, non-catalytic component of the 20S core proteasome complex involved in the proteolytic degradation of most intracellular proteins. This complex plays numerous essential roles within the cell by associating with different regulatory particles. Associated with two 19S regulatory particles, forms the 26S proteasome and thus participates in the ATP-dependent degradation of ubiquitinated proteins. The 26S proteasome plays a key role in the maintenance of protein homeostasis by removing misfolded or damaged proteins that could impair cellular functions, and by removing proteins whose functions are no longer required. Associated with the PA200 or PA28, the 20S proteasome mediates ubiquitin-independent protein degradation. The sequence is that of Proteasome subunit beta type-1 from Danio rerio (Zebrafish).